Reading from the N-terminus, the 266-residue chain is RNA-binding protein 7 (266 aa).

Gly2 carries the N-acetylglycine modification. One can recognise an RRM domain in the interval 10–87; it reads RTLFVGNLET…RPIKIQFRSG (78 aa). ZCCHC8 binding regions lie at residues 25-35 and 59-76; these read LLFELFHQAGP and HEVS…IKLY. Residues 90-115 show a composition bias toward polar residues; sequence HAPQDVSLSYPQHHVGNSSPTSTSPS. A disordered region spans residues 90–118; sequence HAPQDVSLSYPQHHVGNSSPTSTSPSRYE. Ser136 and Ser137 each carry phosphoserine. An Omega-N-methylarginine modification is found at Arg152. The interval 162 to 266 is disordered; that stretch reads SSPLDQSGFS…RDGKWRSSRH (105 aa). The segment covering 173-188 has biased composition (low complexity); sequence SVQSHSHSFNQSSSSQ. Residue Ser204 is modified to Phosphoserine. Positions 209–266 are enriched in basic and acidic residues; the sequence is ADRHYSREQRYTDHGSDHHYRGKRDDFFYEDRNHDDWSHDYDNRRDSSRDGKWRSSRH.

As to quaternary structure, component of the nuclear exosome targeting (NEXT) complex composed of MTREX, ZCCHC8, and RBM7 that directs a subset of non-coding short-lived RNAs for exosomal degradation. Interacts with ZCCHC8 and SF3B2/SAP145. Binds to MTREX through ZCCHC8. Interacts with YWHAE and YWHAZ; these interactions are stress-dependent and RBM7 phosphorylation dependent; release RNA from the NEXT complex and may affect RNA targeting to the nuclear RNA exosomome for degradation. Interacts with MEPCE and LARP7, the core subunits of 7SK snRNP; upon genotoxic stress this interaction is enhanced, triggering the release of inactive P-TEFb complex from the core and P-TEFb complex activation. In terms of processing, phosphorylated at Ser-136 by MAPK14/p38-alpha-activated MAPKAPK2/MK2; this phosphorylation is stress-dependent; this phosphorylation decreases its RNA-binding capacity therefore affecting RNA nuclear exosome-mediated degradation. This phosphorylation mediates YWHAE and YWHAZ interactions. In terms of tissue distribution, ubiquitous.

The protein localises to the nucleus. It localises to the nucleoplasm. In terms of biological role, RNA-binding subunit of the trimeric nuclear exosome targeting (NEXT) complex, a complex that functions as an RNA exosome cofactor that directs a subset of non-coding short-lived RNAs for exosomal degradation. NEXT is involved in surveillance and turnover of aberrant transcripts and non-coding RNAs. Binds preferentially polyuridine sequences and associates with newly synthesized RNAs, including pre-mRNAs and short-lived exosome substrates such as promoter upstream transcripts (PROMPTs), enhancer RNAs (eRNAs), and 3'-extended products from small nuclear RNAs (snRNAs). Participates in several biological processes including DNA damage response (DDR) and stress response. During stress response, activation of the p38MAPK-MK2 pathway decreases RBM7-RNA-binding and subsequently the RNA exosome degradation activities, thereby modulating the turnover of non-coding transcriptome. Participates in DNA damage response (DDR), through its interaction with MEPCE and LARP7, the core subunits of 7SK snRNP complex, that release the positive transcription elongation factor b (P-TEFb) complex from the 7SK snRNP. In turn, activation of P-TEFb complex induces the transcription of P-TEFb-dependent DDR genes to promote cell viability. The sequence is that of RNA-binding protein 7 from Homo sapiens (Human).